The primary structure comprises 129 residues: Glycine cleavage system H protein (129 aa).

The Lipoyl-binding domain maps to 24-106 (LLKIGVSEFA…IGEGWLVILK (83 aa)). Residue lysine 65 is modified to N6-lipoyllysine.

The protein belongs to the GcvH family. In terms of assembly, the glycine cleavage system is composed of four proteins: P, T, L and H. (R)-lipoate is required as a cofactor.

Its function is as follows. The glycine cleavage system catalyzes the degradation of glycine. The H protein shuttles the methylamine group of glycine from the P protein to the T protein. In Prochlorococcus marinus (strain MIT 9215), this protein is Glycine cleavage system H protein.